The following is a 627-amino-acid chain: Pentatricopeptide repeat-containing protein At2g15630, mitochondrial (627 aa).

A mitochondrion-targeting transit peptide spans 1–29; sequence MRRFTVPCILRHRISILSGAGYSPAAARL. PPR repeat units lie at residues 154–188, 189–223, 224–258, 259–293, 294–324, 326–360, 361–395, 396–430, 431–465, 466–500, 501–535, 536–570, and 571–605; these read STIL…GFYP, KTET…EIKS, NVYT…GIKP, TIVT…GFQP, DMQT…IGLV, DSVS…GMVP, TFYT…GIVL, DSVT…GIQP, TQFT…GMKP, DLVM…SINP, DDVT…GIKP, DHIS…GFNP, and TLLT…GIVP.

The protein belongs to the PPR family. P subfamily.

Its subcellular location is the mitochondrion. This chain is Pentatricopeptide repeat-containing protein At2g15630, mitochondrial, found in Arabidopsis thaliana (Mouse-ear cress).